We begin with the raw amino-acid sequence, 230 residues long: Cytochrome b6-f complex iron-sulfur subunit, chloroplastic (230 aa).

A compositionally biased stretch (low complexity) spans 1-16; that stretch reads MASTTLSATPTPSQLS. The tract at residues 1–20 is disordered; sequence MASTTLSATPTPSQLSAAKN. A chloroplast-targeting transit peptide spans 1–56; the sequence is MASTTLSATPTPSQLSAAKNGAYSPSRALLGKTARGLYPEKEMVSRKVTCQATSIP. Residues 73-93 form a helical membrane-spanning segment; the sequence is LLGALSLPTAGMLIPYGAFFV. In terms of domain architecture, Rieske spans 116 to 212; sequence AAAWLKTHGP…CDISEEGKVV (97 aa). Positions 158, 160, 176, and 179 each coordinate [2Fe-2S] cluster. A disulfide bridge connects residues Cys163 and Cys178.

The protein belongs to the Rieske iron-sulfur protein family. As to quaternary structure, the 4 large subunits of the cytochrome b6-f complex are cytochrome b6, subunit IV (17 kDa polypeptide, petD), cytochrome f and the Rieske protein, while the 4 small subunits are petG, petL, petM and petN. The complex functions as a dimer. It depends on [2Fe-2S] cluster as a cofactor.

It is found in the plastid. The protein localises to the chloroplast thylakoid membrane. The catalysed reaction is 2 oxidized [plastocyanin] + a plastoquinol + 2 H(+)(in) = 2 reduced [plastocyanin] + a plastoquinone + 4 H(+)(out). In terms of biological role, component of the cytochrome b6-f complex, which mediates electron transfer between photosystem II (PSII) and photosystem I (PSI), cyclic electron flow around PSI, and state transitions. The chain is Cytochrome b6-f complex iron-sulfur subunit, chloroplastic (petC) from Fritillaria agrestis (Stinkbells).